A 164-amino-acid chain; its full sequence is 6,7-dimethyl-8-ribityllumazine synthase (164 aa).

5-amino-6-(D-ribitylamino)uracil contacts are provided by residues Phe-22, 56–58 (AWE), and 80–82 (AVI). (2S)-2-hydroxy-3-oxobutyl phosphate is bound at residue 85 to 86 (DT). Catalysis depends on His-88, which acts as the Proton donor. Leu-113 serves as a coordination point for 5-amino-6-(D-ribitylamino)uracil. Arg-127 provides a ligand contact to (2S)-2-hydroxy-3-oxobutyl phosphate.

The protein belongs to the DMRL synthase family.

The catalysed reaction is (2S)-2-hydroxy-3-oxobutyl phosphate + 5-amino-6-(D-ribitylamino)uracil = 6,7-dimethyl-8-(1-D-ribityl)lumazine + phosphate + 2 H2O + H(+). The protein operates within cofactor biosynthesis; riboflavin biosynthesis; riboflavin from 2-hydroxy-3-oxobutyl phosphate and 5-amino-6-(D-ribitylamino)uracil: step 1/2. In terms of biological role, catalyzes the formation of 6,7-dimethyl-8-ribityllumazine by condensation of 5-amino-6-(D-ribitylamino)uracil with 3,4-dihydroxy-2-butanone 4-phosphate. This is the penultimate step in the biosynthesis of riboflavin. This chain is 6,7-dimethyl-8-ribityllumazine synthase, found in Gemmatimonas aurantiaca (strain DSM 14586 / JCM 11422 / NBRC 100505 / T-27).